A 197-amino-acid polypeptide reads, in one-letter code: Ribonuclease HII (197 aa).

Positions 9–197 (ELIAGVDEVG…APVKKALEQF (189 aa)) constitute an RNase H type-2 domain. Residues Asp15, Glu16, and Asp107 each coordinate a divalent metal cation.

This sequence belongs to the RNase HII family. Mn(2+) serves as cofactor. It depends on Mg(2+) as a cofactor.

It is found in the cytoplasm. The catalysed reaction is Endonucleolytic cleavage to 5'-phosphomonoester.. Functionally, endonuclease that specifically degrades the RNA of RNA-DNA hybrids. In Haemophilus influenzae (strain PittGG), this protein is Ribonuclease HII.